Here is a 367-residue protein sequence, read N- to C-terminus: Phosphoribosylaminoimidazole-succinocarboxamide synthase (367 aa).

Belongs to the SAICAR synthetase family.

The catalysed reaction is 5-amino-1-(5-phospho-D-ribosyl)imidazole-4-carboxylate + L-aspartate + ATP = (2S)-2-[5-amino-1-(5-phospho-beta-D-ribosyl)imidazole-4-carboxamido]succinate + ADP + phosphate + 2 H(+). Its pathway is purine metabolism; IMP biosynthesis via de novo pathway; 5-amino-1-(5-phospho-D-ribosyl)imidazole-4-carboxamide from 5-amino-1-(5-phospho-D-ribosyl)imidazole-4-carboxylate: step 1/2. The polypeptide is Phosphoribosylaminoimidazole-succinocarboxamide synthase (Shewanella sp. (strain ANA-3)).